A 373-amino-acid chain; its full sequence is Chaperone protein DnaJ (373 aa).

The 66-residue stretch at 5–70 folds into the J domain; sequence DFYATLGVAR…EKRAMYDQYG (66 aa). A CR-type zinc finger spans residues 134–212; that stretch reads GVKKRINIPT…CRGAGRNKAV (79 aa). Residues Cys-147, Cys-150, Cys-164, Cys-167, Cys-186, Cys-189, Cys-200, and Cys-203 each coordinate Zn(2+). CXXCXGXG motif repeat units lie at residues 147 to 154, 164 to 171, 186 to 193, and 200 to 207; these read CDVCNGSG, CPTCKGSG, CPTCHGAG, and CVKCRGAG.

It belongs to the DnaJ family. As to quaternary structure, homodimer. Requires Zn(2+) as cofactor.

The protein resides in the cytoplasm. Its function is as follows. Participates actively in the response to hyperosmotic and heat shock by preventing the aggregation of stress-denatured proteins and by disaggregating proteins, also in an autonomous, DnaK-independent fashion. Unfolded proteins bind initially to DnaJ; upon interaction with the DnaJ-bound protein, DnaK hydrolyzes its bound ATP, resulting in the formation of a stable complex. GrpE releases ADP from DnaK; ATP binding to DnaK triggers the release of the substrate protein, thus completing the reaction cycle. Several rounds of ATP-dependent interactions between DnaJ, DnaK and GrpE are required for fully efficient folding. Also involved, together with DnaK and GrpE, in the DNA replication of plasmids through activation of initiation proteins. The chain is Chaperone protein DnaJ from Neisseria meningitidis serogroup C (strain 053442).